The chain runs to 432 residues: UDP-N-acetylmuramate--L-alanine ligase (432 aa).

Position 108–114 (108–114 (GAHGKTS)) interacts with ATP.

It belongs to the MurCDEF family.

It localises to the cytoplasm. It catalyses the reaction UDP-N-acetyl-alpha-D-muramate + L-alanine + ATP = UDP-N-acetyl-alpha-D-muramoyl-L-alanine + ADP + phosphate + H(+). Its pathway is cell wall biogenesis; peptidoglycan biosynthesis. In terms of biological role, cell wall formation. The chain is UDP-N-acetylmuramate--L-alanine ligase from Bacillus licheniformis (strain ATCC 14580 / DSM 13 / JCM 2505 / CCUG 7422 / NBRC 12200 / NCIMB 9375 / NCTC 10341 / NRRL NRS-1264 / Gibson 46).